Reading from the N-terminus, the 783-residue chain is Lon protease (783 aa).

The Lon N-terminal domain maps to isoleucine 11 to isoleucine 203. Glycine 355–threonine 362 is an ATP binding site. The Lon proteolytic domain occupies serine 591–arginine 772. Residues serine 678 and lysine 721 contribute to the active site.

This sequence belongs to the peptidase S16 family. Homohexamer. Organized in a ring with a central cavity.

The protein localises to the cytoplasm. The enzyme catalyses Hydrolysis of proteins in presence of ATP.. Its function is as follows. ATP-dependent serine protease that mediates the selective degradation of mutant and abnormal proteins as well as certain short-lived regulatory proteins. Required for cellular homeostasis and for survival from DNA damage and developmental changes induced by stress. Degrades polypeptides processively to yield small peptide fragments that are 5 to 10 amino acids long. Binds to DNA in a double-stranded, site-specific manner. Regulates swarmer cell differentiation of V.parahaemolyticus. The protein is Lon protease of Vibrio parahaemolyticus serotype O3:K6 (strain RIMD 2210633).